The primary structure comprises 387 residues: 3-ketoacyl-CoA thiolase (387 aa).

C91 serves as the catalytic Acyl-thioester intermediate. Residues H343 and C373 each act as proton acceptor in the active site.

It belongs to the thiolase-like superfamily. Thiolase family. As to quaternary structure, heterotetramer of two alpha chains (FadB) and two beta chains (FadA).

The protein localises to the cytoplasm. It catalyses the reaction an acyl-CoA + acetyl-CoA = a 3-oxoacyl-CoA + CoA. Its pathway is lipid metabolism; fatty acid beta-oxidation. Catalyzes the final step of fatty acid oxidation in which acetyl-CoA is released and the CoA ester of a fatty acid two carbons shorter is formed. In Shewanella sp. (strain MR-4), this protein is 3-ketoacyl-CoA thiolase.